The sequence spans 255 residues: Proteasome subunit alpha type-3 (255 aa).

Ser-2 carries the N-acetylserine modification. Lys-57, Lys-206, and Lys-230 each carry N6-acetyllysine. Residues Ser-243 and Ser-250 each carry the phosphoserine modification.

It belongs to the peptidase T1A family. In terms of assembly, the 26S proteasome consists of a 20S proteasome core and two 19S regulatory subunits. The 20S proteasome core is a barrel-shaped complex made of 28 subunits that are arranged in four stacked rings. The two outer rings are each formed by seven alpha subunits, and the two inner rings are formed by seven beta subunits. The proteolytic activity is exerted by three beta-subunits PSMB5, PSMB6 and PSMB7. Interacts with AURKB. Interacts with CDKN1A. Interacts with MDM2 and RB1. Interacts with the C-terminus of TBXA2R isoform 2. Interacts with DNAJB2. As to quaternary structure, (Microbial infection) Interacts with HIV-1 Tat protein. (Microbial infection) Interacts with hepatitis C virus (HCV) F protein. In terms of assembly, (Microbial infection) Interacts with Epstein-Barr virus EBNA3 proteins.

The protein localises to the cytoplasm. The protein resides in the nucleus. Its function is as follows. Component of the 20S core proteasome complex involved in the proteolytic degradation of most intracellular proteins. This complex plays numerous essential roles within the cell by associating with different regulatory particles. Associated with two 19S regulatory particles, forms the 26S proteasome and thus participates in the ATP-dependent degradation of ubiquitinated proteins. The 26S proteasome plays a key role in the maintenance of protein homeostasis by removing misfolded or damaged proteins that could impair cellular functions, and by removing proteins whose functions are no longer required. Associated with the PA200 or PA28, the 20S proteasome mediates ubiquitin-independent protein degradation. This type of proteolysis is required in several pathways including spermatogenesis (20S-PA200 complex) or generation of a subset of MHC class I-presented antigenic peptides (20S-PA28 complex). Binds to the C-terminus of CDKN1A and thereby mediates its degradation. Negatively regulates the membrane trafficking of the cell-surface thromboxane A2 receptor (TBXA2R) isoform 2. The sequence is that of Proteasome subunit alpha type-3 from Homo sapiens (Human).